The following is a 343-amino-acid chain: Anthranilate phosphoribosyltransferase (343 aa).

Residues Gly85, 88-89 (GD), Thr93, 95-98 (NIST), 113-121 (KHGGRSVSS), and Ala125 each bind 5-phospho-alpha-D-ribose 1-diphosphate. Gly85 contributes to the anthranilate binding site. Mg(2+) is bound at residue Ser97. Position 171 (Arg171) interacts with anthranilate. Asp230 and Glu231 together coordinate Mg(2+).

Belongs to the anthranilate phosphoribosyltransferase family. Homodimer. Requires Mg(2+) as cofactor.

It catalyses the reaction N-(5-phospho-beta-D-ribosyl)anthranilate + diphosphate = 5-phospho-alpha-D-ribose 1-diphosphate + anthranilate. Its pathway is amino-acid biosynthesis; L-tryptophan biosynthesis; L-tryptophan from chorismate: step 2/5. Its function is as follows. Catalyzes the transfer of the phosphoribosyl group of 5-phosphorylribose-1-pyrophosphate (PRPP) to anthranilate to yield N-(5'-phosphoribosyl)-anthranilate (PRA). This Aromatoleum aromaticum (strain DSM 19018 / LMG 30748 / EbN1) (Azoarcus sp. (strain EbN1)) protein is Anthranilate phosphoribosyltransferase.